Reading from the N-terminus, the 231-residue chain is 2-C-methyl-D-erythritol 4-phosphate cytidylyltransferase (231 aa).

This sequence belongs to the IspD/TarI cytidylyltransferase family. IspD subfamily. As to quaternary structure, homodimer.

The catalysed reaction is 2-C-methyl-D-erythritol 4-phosphate + CTP + H(+) = 4-CDP-2-C-methyl-D-erythritol + diphosphate. The protein operates within isoprenoid biosynthesis; isopentenyl diphosphate biosynthesis via DXP pathway; isopentenyl diphosphate from 1-deoxy-D-xylulose 5-phosphate: step 2/6. Its function is as follows. Catalyzes the formation of 4-diphosphocytidyl-2-C-methyl-D-erythritol from CTP and 2-C-methyl-D-erythritol 4-phosphate (MEP). This is 2-C-methyl-D-erythritol 4-phosphate cytidylyltransferase from Citrobacter koseri (strain ATCC BAA-895 / CDC 4225-83 / SGSC4696).